The following is a 414-amino-acid chain: uncharacterized protein (414 aa).

3 disordered regions span residues 136–168, 298–322, and 350–382; these read SSKS…TVPT, KNFP…SYHR, and PPHS…MSTS.

This is an uncharacterized protein from Macaca fascicularis (Crab-eating macaque).